The following is a 282-amino-acid chain: Putative sugar uptake protein lp_2594 (282 aa).

Helical transmembrane passes span 2-21, 31-48, 53-75, 90-112, 119-136, 146-163, 176-194, 209-226, 233-252, and 262-281; these read IFLIAIIPALCWGINPLLVG, MFGMGIGDGLIALIFWLF, VTISGVTFGLAMISGAAWAIGQL, MPISTALQLVGTSLIGVLMFGEW, ILGLLAIMLIVAGSALSA, FSCYLPLLMTTIGYWIYS, LFLPQMLGILIVAVGWAIY, TLPGILYGIAAFMYILSA, NAYIIGQLSVVISTLSGLFF, and IVSVATGLLFIFMGCVTTAL.

This sequence belongs to the GRP transporter (TC 2.A.7.5) family.

The protein localises to the cell membrane. The sequence is that of Putative sugar uptake protein lp_2594 from Lactiplantibacillus plantarum (strain ATCC BAA-793 / NCIMB 8826 / WCFS1) (Lactobacillus plantarum).